Consider the following 117-residue polypeptide: Large ribosomal subunit protein uL22 (117 aa).

The protein belongs to the universal ribosomal protein uL22 family. In terms of assembly, part of the 50S ribosomal subunit.

Functionally, this protein binds specifically to 23S rRNA; its binding is stimulated by other ribosomal proteins, e.g. L4, L17, and L20. It is important during the early stages of 50S assembly. It makes multiple contacts with different domains of the 23S rRNA in the assembled 50S subunit and ribosome. The globular domain of the protein is located near the polypeptide exit tunnel on the outside of the subunit, while an extended beta-hairpin is found that lines the wall of the exit tunnel in the center of the 70S ribosome. The chain is Large ribosomal subunit protein uL22 from Chlorobium phaeobacteroides (strain BS1).